Reading from the N-terminus, the 207-residue chain is GTP-binding protein Rheb homolog 1 (207 aa).

GTP contacts are provided by glycine 25, lysine 26, serine 27, tyrosine 42, threonine 45, asparagine 126, aspartate 129, and alanine 157. Mg(2+) is bound at residue serine 27. Residues 42 to 50 (YESTIEDQH) carry the Effector region motif. A Mg(2+)-binding site is contributed by threonine 45. Residues 180 to 193 (NLSPTERPNGNSPK) show a composition bias toward polar residues. The interval 180-207 (NLSPTERPNGNSPKRNPFKDDGKPCSIS) is disordered. Residues 196 to 207 (PFKDDGKPCSIS) are compositionally biased toward basic and acidic residues. Cysteine 204 bears the Cysteine methyl ester mark. The S-farnesyl cysteine moiety is linked to residue cysteine 204. Positions 205-207 (SIS) are cleaved as a propeptide — removed in mature form.

Belongs to the small GTPase superfamily. Rheb family.

It localises to the cell membrane. The catalysed reaction is GTP + H2O = GDP + phosphate + H(+). In terms of biological role, binds GTP and exhibits intrinsic GTPase activity. This is GTP-binding protein Rheb homolog 1 (rheb-1) from Caenorhabditis elegans.